Here is a 338-residue protein sequence, read N- to C-terminus: Ketol-acid reductoisomerase (NADP(+)) (338 aa).

One can recognise a KARI N-terminal Rossmann domain in the interval 1–181 (MKVFYDKDAD…GGGRAGIIET (181 aa)). NADP(+) contacts are provided by residues 24–27 (YGSQ), Arg-47, and Ser-52. The active site involves His-107. Residue Gly-133 coordinates NADP(+). In terms of domain architecture, KARI C-terminal knotted spans 182–327 (NFREETETDL…AKLRAMMPWI (146 aa)). The Mg(2+) site is built by Asp-190, Glu-194, Glu-226, and Glu-230. Ser-251 is a binding site for substrate.

This sequence belongs to the ketol-acid reductoisomerase family. Mg(2+) is required as a cofactor.

It catalyses the reaction (2R)-2,3-dihydroxy-3-methylbutanoate + NADP(+) = (2S)-2-acetolactate + NADPH + H(+). The catalysed reaction is (2R,3R)-2,3-dihydroxy-3-methylpentanoate + NADP(+) = (S)-2-ethyl-2-hydroxy-3-oxobutanoate + NADPH + H(+). Its pathway is amino-acid biosynthesis; L-isoleucine biosynthesis; L-isoleucine from 2-oxobutanoate: step 2/4. It participates in amino-acid biosynthesis; L-valine biosynthesis; L-valine from pyruvate: step 2/4. In terms of biological role, involved in the biosynthesis of branched-chain amino acids (BCAA). Catalyzes an alkyl-migration followed by a ketol-acid reduction of (S)-2-acetolactate (S2AL) to yield (R)-2,3-dihydroxy-isovalerate. In the isomerase reaction, S2AL is rearranged via a Mg-dependent methyl migration to produce 3-hydroxy-3-methyl-2-ketobutyrate (HMKB). In the reductase reaction, this 2-ketoacid undergoes a metal-dependent reduction by NADPH to yield (R)-2,3-dihydroxy-isovalerate. The polypeptide is Ketol-acid reductoisomerase (NADP(+)) (Ralstonia nicotianae (strain ATCC BAA-1114 / GMI1000) (Ralstonia solanacearum)).